We begin with the raw amino-acid sequence, 131 residues long: MMCKALVFAVLLLAVPLERADSRALRTPVDAIQFVEQFLEHYNDLLNIDDLENQTGDQLESPQPLSSGLKVAEYPKWVDVPSQNDNTWFRLLRGALANRKRALPDRAKRGWNRGCFGLKLDRIGSLSGLGC.

An N-terminal signal peptide occupies residues 1 to 20; that stretch reads MMCKALVFAVLLLAVPLERA. A propeptide spanning residues 21–109 is cleaved from the precursor; the sequence is DSRALRTPVD…KRALPDRAKR (89 aa). A disulfide bond links Cys115 and Cys131.

This sequence belongs to the natriuretic peptide family. Highly expressed in brain and liver, and moderately in gut, gills and heart. Expressed to a low level in atrium, ventricle and liver of fresh water eels.

Its subcellular location is the secreted. Its function is as follows. Hormone which plays a role in endochondral ossification through regulation of cartilaginous growth plate chondrocytes proliferation and differentiation. May also be vasoactive and natriuretic. May be important for freshwater adaptation. This Anguilla japonica (Japanese eel) protein is C-type natriuretic peptide (cnp).